A 944-amino-acid chain; its full sequence is Trehalose monomycolate exporter MmpL3 (944 aa).

Residues 1 to 13 are Cytoplasmic-facing; that stretch reads MFAWWGRTVYRYR. Residues 14–34 traverse the membrane as a helical segment; that stretch reads FIVIGVMVALCLGGGVFGLSL. At 35 to 185 the chain is on the periplasmic side; that stretch reads GKHVTQSGFY…TIATDQRRME (151 aa). An a 1,2-diacylglycero-3-phosphoethanolamine-binding site is contributed by 40–44; sequence QSGFY. Residues 186–206 traverse the membrane as a helical segment; it reads VLALPLVAVVLFFVFGGVIAA. Topologically, residues 207–209 are cytoplasmic; that stretch reads GLP. A helical membrane pass occupies residues 210–230; it reads VMVGGLCIAGALGIMRFLAIF. The Periplasmic portion of the chain corresponds to 231-235; that stretch reads GPVHY. The chain crosses the membrane as a helical span at residues 236 to 256; that stretch reads FAQPVVSLIGLGIAIDYGLFI. The Cytoplasmic portion of the chain corresponds to 257–286; sequence VSRFREEIAEGYDTETAVRRTVITAGRTVT. The chain crosses the membrane as a helical span at residues 287 to 307; the sequence is FSAVLIVASAIGLLLFPQGFL. The Periplasmic portion of the chain corresponds to 308 to 314; the sequence is KSLTYAT. The chain crosses the membrane as a helical span at residues 315 to 335; that stretch reads IASVMLSAILSITVLPACLGI. Residues 336-396 lie on the Cytoplasmic side of the membrane; sequence LGKHVDALGV…KLVNRVMKRP (61 aa). The chain crosses the membrane as a helical span at residues 397–417; that stretch reads VLFAAPIVIIMILLIIPVGKL. Topologically, residues 418-562 are periplasmic; sequence SLGGISEKYL…HGLFAKMPLM (145 aa). Residues 563–583 traverse the membrane as a helical segment; sequence VVILLTTTIVLMFLAFGSVVL. At 584-586 the chain is on the cytoplasmic side; sequence PIK. The helical transmembrane segment at 587 to 607 threads the bilayer; that stretch reads ATLMSALTLGSTMGILTWIFV. Residues 608–616 lie on the Periplasmic side of the membrane; the sequence is DGHFSKWLN. The helical transmembrane segment at 617–637 threads the bilayer; sequence FTPTPLTAPVIGLIIALVFGL. The Cytoplasmic segment spans residues 638-672; sequence STDYEVFLVSRMVEARERGMSTQEAIRIGTAATGR. A helical membrane pass occupies residues 673–693; that stretch reads IITAAALIVAVVAGAFVFSDL. Over 694–698 the chain is Periplasmic; that stretch reads VMMKY. A helical transmembrane segment spans residues 699 to 719; it reads LAFGLMAALLLDATVVRMFLV. The Cytoplasmic portion of the chain corresponds to 720-944; that stretch reads PSVMKLLGDD…QDLLRREGRL (225 aa). Residues 778–944 form a disordered region; the sequence is AAGDPRPPHD…QDLLRREGRL (167 aa). The segment covering 791-828 has biased composition (low complexity); the sequence is PLAESPRPARSSPASSPELTPALEATAAPAAPSGASTT. Positions 829–839 are enriched in polar residues; it reads RMQIGSSTEPP. The segment covering 855 to 866 has biased composition (pro residues); the sequence is STPPPTPTPPSA.

It belongs to the resistance-nodulation-cell division (RND) (TC 2.A.6) family. MmpL subfamily. Monomer. Interacts with TtfA (via N-terminus); active trehalose monomycolate (TMM) biosynthesis is not required for the complex formation.

The protein localises to the cell inner membrane. It localises to the cell septum. It is found in the cell tip. In terms of biological role, transports trehalose monomycolate (TMM) to the cell wall. Flips TMM across the inner membrane. Membrane potential is not required for this function. Transports probably phosphatidylethanolamine (PE) as well. Binds specifically both TMM and PE, but not trehalose dimycolate (TDM). Also binds diacylglycerol (DAG) and other phospholipids, including phosphatidylglycerol (PG), phosphatidylinositol (PI), and cardiolipin (CDL). Contributes to membrane potential, cell wall composition, antibiotic susceptibility and fitness. Could also be part of a heme-iron acquisition system. The polypeptide is Trehalose monomycolate exporter MmpL3 (mmpL3) (Mycobacterium tuberculosis (strain CDC 1551 / Oshkosh)).